Consider the following 232-residue polypeptide: MSVISMKQLLEAGVHFGHQTRRWNPKMGEYIFTERNGIYIIDLQKTVKKVEEAYSVMKDIATEGGTILFVGTKKQAQEAVEEEAKRSGMYFVNQRWLGGMLTNFKTIKKRIERLRELEKMEEDGTFEVLPKKEVIKLRHEQEKLEKFLGGIKDMTEMPDALFVVDPRKERIAIQEAHTLGIPVISIVDTNCDPDEVDYVIPGNDDAIRAVKLIASTMANAIIEGKQGVQTEA.

This sequence belongs to the universal ribosomal protein uS2 family.

This chain is Small ribosomal subunit protein uS2, found in Alkaliphilus oremlandii (strain OhILAs) (Clostridium oremlandii (strain OhILAs)).